The sequence spans 218 residues: Zinc metalloproteinase-disintegrin-like bothrojarin-2 (218 aa).

Residues 14–100 (PPVCGNELLE…QCPTDDFHKN (87 aa)) form the Disintegrin domain. Ca(2+) is bound by residues valine 16, leucine 21, glutamate 23, glutamate 26, and aspartate 29. 10 disulfide bridges follow: cysteine 28-cysteine 46, cysteine 30-cysteine 41, cysteine 40-cysteine 63, cysteine 54-cysteine 60, cysteine 59-cysteine 85, cysteine 72-cysteine 92, cysteine 79-cysteine 111, cysteine 104-cysteine 116, cysteine 123-cysteine 173, and cysteine 151-cysteine 161. The D/ECD-tripeptide signature appears at 78–80 (ECD).

The protein belongs to the venom metalloproteinase (M12B) family. P-III subfamily. P-IIIa sub-subfamily. Monomer. Requires Zn(2+) as cofactor. Glycosylated. In terms of tissue distribution, expressed by the venom gland.

It is found in the secreted. Functionally, the hemorrhagic metalloproteinase-disintegrin-like bothrojarin-1 is a potent inhibitor of collagen-induced platelet aggregation by blockage of alpha-2/beta-1 (ITGA2/ITGB1) integrin. It does not present any fibrinogen-clotting activity. This chain is Zinc metalloproteinase-disintegrin-like bothrojarin-2, found in Bothrops jararaca (Jararaca).